We begin with the raw amino-acid sequence, 484 residues long: MPAPTAVPPPHPLPPDGGWGWVVVGASFISIGFSYAFPKSVTVFFKDIQEIFRAGHSKVAWISSIMLAVMYAGGPISSVLVNKYGSRPVVVIGGLLCCTGMILASFSTSMIQLYLTIGFISGLGLAFNLQPALTILGKYFYRRRPLASGLAMTGSPVFLSSLAPFNQYLFNSYGLKGSFLILGGIFLHSCVAGSLMRPVGTSQQSPKSKSKVSSRHDSSTKKAPKLTLAQRINMFLDFSLFKHRGFLIYLSGNVIMFLGFFAPVIFLSPYAKNRGVDDYKAAYLLSVMAFVDMFSRPCGGLIANTRLVRPRIQYFFSLAIVFTGVCHLLCPLAESYTALVVYAIFFGYGFGSVSSILFETLMDLVGPARFSSAVGLVTIVECCPVLLGPPLAGKLVDETGEHKYLFVASGAIVVLAGIWLFIGNAINYRLLAKERKREKARKKKSPNRHSKELESLSKSNQDDVAVRVPQAHRSPSDKERESNI.

Over 1 to 16 (MPAPTAVPPPHPLPPD) the chain is Cytoplasmic. Residues 17–37 (GGWGWVVVGASFISIGFSYAF) traverse the membrane as a helical segment. Residues 38 to 60 (PKSVTVFFKDIQEIFRAGHSKVA) are Extracellular-facing. A helical membrane pass occupies residues 61 to 81 (WISSIMLAVMYAGGPISSVLV). Residues 82 to 87 (NKYGSR) lie on the Cytoplasmic side of the membrane. A helical membrane pass occupies residues 88-108 (PVVVIGGLLCCTGMILASFST). The Extracellular portion of the chain corresponds to 109 to 116 (SMIQLYLT). The helical transmembrane segment at 117 to 137 (IGFISGLGLAFNLQPALTILG) threads the bilayer. Residues 138-144 (KYFYRRR) are Cytoplasmic-facing. A helical transmembrane segment spans residues 145–165 (PLASGLAMTGSPVFLSSLAPF). The Extracellular segment spans residues 166-174 (NQYLFNSYG). The chain crosses the membrane as a helical span at residues 175–195 (LKGSFLILGGIFLHSCVAGSL). The Cytoplasmic segment spans residues 196–245 (MRPVGTSQQSPKSKSKVSSRHDSSTKKAPKLTLAQRINMFLDFSLFKHRG). A disordered region spans residues 198 to 223 (PVGTSQQSPKSKSKVSSRHDSSTKKA). The helical transmembrane segment at 246–266 (FLIYLSGNVIMFLGFFAPVIF) threads the bilayer. At 267–281 (LSPYAKNRGVDDYKA) the chain is on the extracellular side. Residues 282-302 (AYLLSVMAFVDMFSRPCGGLI) traverse the membrane as a helical segment. Over 303–311 (ANTRLVRPR) the chain is Cytoplasmic. A helical membrane pass occupies residues 312–332 (IQYFFSLAIVFTGVCHLLCPL). The Extracellular segment spans residues 333-337 (AESYT). Residues 338 to 358 (ALVVYAIFFGYGFGSVSSILF) form a helical membrane-spanning segment. Over 359–372 (ETLMDLVGPARFSS) the chain is Cytoplasmic. Residues 373 to 393 (AVGLVTIVECCPVLLGPPLAG) traverse the membrane as a helical segment. Residues 394–405 (KLVDETGEHKYL) are Extracellular-facing. Residues 406–426 (FVASGAIVVLAGIWLFIGNAI) traverse the membrane as a helical segment. The Cytoplasmic portion of the chain corresponds to 427-484 (NYRLLAKERKREKARKKKSPNRHSKELESLSKSNQDDVAVRVPQAHRSPSDKERESNI). The interval 437–484 (REKARKKKSPNRHSKELESLSKSNQDDVAVRVPQAHRSPSDKERESNI) is disordered. The segment covering 438–448 (EKARKKKSPNR) has biased composition (basic residues). 2 stretches are compositionally biased toward basic and acidic residues: residues 449–465 (HSKELESLSKSNQDDVA) and 474–484 (SPSDKERESNI).

This sequence belongs to the major facilitator superfamily. Monocarboxylate porter (TC 2.A.1.13) family. Homodimer. Interacts with GRID2IP. Interacts with EMB; interaction mediates SLC16A7 targeting to the plasma membrane. Interacts with isoform 2 of BSG.

The protein localises to the cell membrane. Its subcellular location is the basolateral cell membrane. It localises to the cytoplasm. The enzyme catalyses 3-methyl-2-oxobutanoate(out) + H(+)(out) = 3-methyl-2-oxobutanoate(in) + H(+)(in). It catalyses the reaction (S)-lactate(in) + H(+)(in) = (S)-lactate(out) + H(+)(out). It carries out the reaction acetoacetate(out) + H(+)(out) = acetoacetate(in) + H(+)(in). The catalysed reaction is (R)-3-hydroxybutanoate(out) + H(+)(out) = (R)-3-hydroxybutanoate(in) + H(+)(in). The enzyme catalyses 4-methyl-2-oxopentanoate(out) + H(+)(out) = 4-methyl-2-oxopentanoate(in) + H(+)(in). It catalyses the reaction pyruvate(out) + H(+)(out) = pyruvate(in) + H(+)(in). It carries out the reaction (S)-3-hydroxybutanoate(out) + H(+)(out) = (S)-3-hydroxybutanoate(in) + H(+)(in). Transport activity exhibits steep dependence on substrate concentration. Substrate concentration sensitivity of SLC16A7 arises from the strong inter-subunit cooperativity of the SLC16A7 dimer during transport. Inhibited by AR-C155858. In terms of biological role, proton-coupled monocarboxylate symporter. Catalyzes the rapid transport across the plasma membrane of monocarboxylates such as L-lactate, pyruvate and ketone bodies, acetoacetate, beta-hydroxybutyrate and acetate. Dimerization is functionally required and both subunits work cooperatively in transporting substrate. This Meriones unguiculatus (Mongolian jird) protein is Monocarboxylate transporter 2 (SLC16A7).